We begin with the raw amino-acid sequence, 617 residues long: Dihydroxy-acid dehydratase (617 aa).

A Mg(2+)-binding site is contributed by D82. C123 contacts [2Fe-2S] cluster. Residues D124 and K125 each coordinate Mg(2+). The residue at position 125 (K125) is an N6-carboxylysine. C197 contacts [2Fe-2S] cluster. E497 is a binding site for Mg(2+). S523 (proton acceptor) is an active-site residue.

The protein belongs to the IlvD/Edd family. Homodimer. [2Fe-2S] cluster is required as a cofactor. The cofactor is Mg(2+).

The catalysed reaction is (2R)-2,3-dihydroxy-3-methylbutanoate = 3-methyl-2-oxobutanoate + H2O. It catalyses the reaction (2R,3R)-2,3-dihydroxy-3-methylpentanoate = (S)-3-methyl-2-oxopentanoate + H2O. It functions in the pathway amino-acid biosynthesis; L-isoleucine biosynthesis; L-isoleucine from 2-oxobutanoate: step 3/4. Its pathway is amino-acid biosynthesis; L-valine biosynthesis; L-valine from pyruvate: step 3/4. Its function is as follows. Functions in the biosynthesis of branched-chain amino acids. Catalyzes the dehydration of (2R,3R)-2,3-dihydroxy-3-methylpentanoate (2,3-dihydroxy-3-methylvalerate) into 2-oxo-3-methylpentanoate (2-oxo-3-methylvalerate) and of (2R)-2,3-dihydroxy-3-methylbutanoate (2,3-dihydroxyisovalerate) into 2-oxo-3-methylbutanoate (2-oxoisovalerate), the penultimate precursor to L-isoleucine and L-valine, respectively. In Streptomyces avermitilis (strain ATCC 31267 / DSM 46492 / JCM 5070 / NBRC 14893 / NCIMB 12804 / NRRL 8165 / MA-4680), this protein is Dihydroxy-acid dehydratase.